The sequence spans 496 residues: MATFKDACFHYRRLTALNRRLCNIGANSICMPVPDAKIKGWCLECCQIADLTHCYGCSLPHVCKWCVQNRRCFLDNEPHLLKLRTVKHPITKDKLQCIIDLYNIIFPINDKVIRKFERMIKQRKCRNQYKIEWYNHLLLPITLNAAAFKFDENNLYYVFGLYEKSVSDIYAPYRIVNFINEFDKLLLDDINFTRMSNLPIELRNHYAKKYFQLSRLPSSKLKQIYFSDFTKETVIFNTYTKTPGRSIYRNVTEFNWRDELELYSDLKNDKNKLIAAMMTSKYTRFYAHDNNFGRLKMTIFELGHHCQPNYVASNHPGNASDIQYCKWCNIKYFLSKIDWRIRDMYNLLMEFIKDCYKSNVNVGHCSSVENIYPLIKRLIWSLFTNHMDQTIEEVFNHMSPVSVEGTNVIMLILGLNISLYNEIKRTLNVDSIPMVLNLNEFSSIVKSISSKWYNVDELDKLPMSIKSTEELIEMKNSGTLTEEFELLISNSEDDNE.

Positions methionine 1–leucine 81 are RNA-binding. Residues cysteine 42–histidine 79 are zinc-binding domain. The segment at lysine 82 to asparagine 177 is important for cytoskeleton localization. Residues aspartate 321–glutamate 496 form an interaction with host IRF3 region. The pLxIS motif signature appears at leucine 486–serine 489.

This sequence belongs to the rotavirus NSP1 family. In terms of assembly, interacts (via C-terminus) with host IRF3; this interaction leads to IRF3 degradation. Interacts with host IRF7; this interaction leads to IRF7 degradation. Interacts with host CUL1 and CUL3.

It is found in the host cytoplasm. Its subcellular location is the host cytoskeleton. Its function is as follows. Plays a role in the inhibition of host innate immunity by inducing the degradation of key host factors required to activate interferon production such as IRF3, IRF5 or IRF7. Associates with components of cullin RING ligases (CRLs) including CUL1 or CUL3, which are essential multisubunit ubiquitination complexes, to modulate their activities. The chain is Non-structural protein 1 from Rotavirus A (isolate RVA/Monkey/South Africa/SA11-H96/1958/G3P5B[2]) (RV-A).